A 588-amino-acid chain; its full sequence is Zinc finger protein 599 (588 aa).

Residues 9-80 (VSFEDVVVTF…KRGLSQSTCA (72 aa)) enclose the KRAB domain. 14 C2H2-type zinc fingers span residues 199-221 (YTCTECGKGFSKKWALVRHQQIH), 227-249 (YECNECGKACRYMADVIRHMRLH), 255-277 (YKCIECGKAFKRRFHLTEHQRIH), 283-305 (YECKECGKAFTHRSSFIQHNMTH), 311-333 (FLCKECGKAFYYSSSFAQHMRIH), 339-361 (YECGECGKAFTHRSTFIQHNVTH), 367-389 (FLCKECGKTFCLNSSFTQHMRIH), 395-417 (YECGECGKAFTHRSTFIRHKRTH), 423-445 (FECKECGKAFCDSSSLIQHMRIH), 451-473 (YECSECGKAFTHHSVFIRHNRTH), 479-501 (LECKECAKAFYYSSSFTRHMRIH), 507-529 (YVCRECGKAFTQPANFVRHNRIH), 535-557 (FECKECEKAFCDNFALTQHMRTH), and 563-585 (FECNECGKTFSHSSSFTHHRKIH).

It belongs to the krueppel C2H2-type zinc-finger protein family.

The protein localises to the nucleus. Its function is as follows. May be involved in transcriptional regulation. This chain is Zinc finger protein 599 (ZNF599), found in Homo sapiens (Human).